Reading from the N-terminus, the 562-residue chain is Urocanate hydratase (562 aa).

NAD(+) contacts are provided by residues 52–53 (GG), Q130, 176–178 (GMG), E196, R201, 242–243 (NA), 263–267 (QTSAH), 273–274 (YL), and Y322. C410 is an active-site residue. G492 is an NAD(+) binding site.

This sequence belongs to the urocanase family. NAD(+) is required as a cofactor.

Its subcellular location is the cytoplasm. It catalyses the reaction 4-imidazolone-5-propanoate = trans-urocanate + H2O. It functions in the pathway amino-acid degradation; L-histidine degradation into L-glutamate; N-formimidoyl-L-glutamate from L-histidine: step 2/3. In terms of biological role, catalyzes the conversion of urocanate to 4-imidazolone-5-propionate. This is Urocanate hydratase from Klebsiella pneumoniae subsp. pneumoniae (strain ATCC 700721 / MGH 78578).